Here is a 335-residue protein sequence, read N- to C-terminus: Cell division protein ZipA (335 aa).

The Periplasmic segment spans residues Met1–Asn4. A helical membrane pass occupies residues Ala5–Ser25. Residues Asn26 to Ser335 lie on the Cytoplasmic side of the membrane.

It belongs to the ZipA family. Interacts with FtsZ via their C-terminal domains.

The protein resides in the cell inner membrane. Functionally, essential cell division protein that stabilizes the FtsZ protofilaments by cross-linking them and that serves as a cytoplasmic membrane anchor for the Z ring. Also required for the recruitment to the septal ring of downstream cell division proteins. The protein is Cell division protein ZipA of Histophilus somni (strain 129Pt) (Haemophilus somnus).